A 285-amino-acid chain; its full sequence is UstYa family oxidase phomYe (285 aa).

A helical membrane pass occupies residues 32-54 (LFYGWKGIAFLSTLTNVLFISGF). The tract at residues 143-165 (YGFGTPLTGPGSEGNEHDPTPWT) is disordered. The short motif at 177-181 (HQLHC) is the HXXHC 1 element. An N-linked (GlcNAc...) asparagine glycan is attached at asparagine 202. The HXXHC 2 signature appears at 209 to 213 (HVDHC).

This sequence belongs to the ustYa family.

The protein localises to the membrane. It functions in the pathway mycotoxin biosynthesis. Its function is as follows. UstYa family oxidase; part of the gene cluster that mediates the biosynthesis of the phomopsins, a group of hexapeptide mycotoxins which infects lupins and causes lupinosis disease in livestock. Within the pathway, phomYe catalyzes the desaturation of the Pro moiety into 3,4-dehydroproline (dPro). The pathway starts with the processing of the precursor phomA by several endopeptidases including kexin proteases as well as the cluster-specific S41 family peptidase phomP1 and the oligopeptidase phomG to produce 10 identical copies of the hexapeptide Tyr-Val-Ile-Pro-Ile-Asp. After being excised from the precursor peptide, the core peptides are cyclized and modified post-translationally by enzymes encoded within the gene cluster. The timing and order of proteolysis of the phomA precursor and PTMs are still unknown. Two tyrosinase-like enzymes, phomQ1 and phomQ2, catalyze the chlorination and hydroxylation of Tyr, respectively. PhomYb, is proposed to be involved in the construction of the macrocyclic structure. The other 4 ustYa family proteins may be involved in PTMs that generate the unique structure of phomopsin A. PhomYa is required for the hydroxylation of C-beta of Tyr. PhomYc, phomYd, and phomYe are responsible for the biosynthesis of 2,3-dehydroisoleucine (dIle), 2,3-dehydroaspartic acid (dAsp), and 3,4-dehydroproline (dPro), respectively. While dIle formation by phomYc is indispensable for the installation of dAsp by phomYd, the order of the other PTMs have not been elucidated yet. Most of the biosynthetic enzymes likely have broad substrate specificity, and thus, there might be a metabolic grid from a precursor to phomopsin A. The enzyme(s) responsible for the biosynthesis of 3,4-dehydrovaline (dVal) have also not been identified yet. Finally, phomM acts as an S-adenosylmethionine-dependent alpha-N-methyltransferase that catalyzes two successive N-methylation reactions, converting N-desmethyl-phomopsin A to phomopsin A and phomopsin A further to an N,N-dimethylated congener called phomopsin E. The sequence is that of UstYa family oxidase phomYe from Diaporthe leptostromiformis (Lupinosis disease fungus).